A 380-amino-acid polypeptide reads, in one-letter code: Ribosomal RNA small subunit methyltransferase, mitochondrial (380 aa).

The N-terminal 26 residues, 1-26 (MILRLKDQTLIKINSTRSYLSSLVFR), are a transit peptide targeting the mitochondrion. Residues H70, L72, G97, E118, D146, and N161 each contribute to the S-adenosyl-L-methionine site.

This sequence belongs to the class I-like SAM-binding methyltransferase superfamily. rRNA adenine N(6)-methyltransferase family.

It is found in the mitochondrion. It catalyses the reaction adenosine(1914)/adenosine(1915) in 18S rRNA + 4 S-adenosyl-L-methionine = N(6)-dimethyladenosine(1914)/N(6)-dimethyladenosine(1915) in 18S rRNA + 4 S-adenosyl-L-homocysteine + 4 H(+). Functionally, N6-adenine methyltransferase which modifies the AA dinucleotide at the plant mitochondrial 18S rRNA nucleotides A1914 and A1915. Not active as mitochondrial transcription factor. This chain is Ribosomal RNA small subunit methyltransferase, mitochondrial, found in Arabidopsis thaliana (Mouse-ear cress).